The primary structure comprises 557 residues: MNNPRHNIREVRSPRGTEISAKSWLTEAPLRMLMNNLDPDVAENPHELVVYGGIGRAARTWADFDRIVASLKDLNEDETLLVQSGKPVGVFRTHKDAPRVLIANSNLVPHWATWDHFNELDKKGLAMYGQMTAGSWIYIGTQGIVQGTYETFVEAGRQHYGGSLKGKWILTGGLGGMGGAQPLAAVMAGACCLAVECNPDSIDFRLRTRYLDEKAETLEEAMEMIERWTKAGEPKSVGLLGNAAEILPEMVRRGIRPDMVTDQTSAHDPINGYLPKGWTMAEWKAKRESDPKAVEKAARASMRDHVEAMLAFWDSGVPTLDYGNNIRQVAKDEGLERAFDFPGFVPAYIRPLFCRGIGPFRWAALSGDPEDIYRTDRKVKELLPDNKHLHNWLDMARERIAFQGLPARICWVGLGDRHRLGLAFNEMVRSGELKAPIVIGRDHLDSGSVASPNRETEAMKDGSDAVSDWPLLNALLNTASGATWVSLHHGGGVGMGFSQHSGMVICCDGTDDAARRIERVLWNDPATGVMRHADAGYDIAVDCAREKGLRLPGILGE.

Residues 52–53 (GG), Q130, 176–178 (GMG), E196, 242–243 (NA), 263–267 (QTSAH), 273–274 (YL), and Y322 each bind NAD(+). The active site involves C410. G492 is a binding site for NAD(+).

Belongs to the urocanase family. NAD(+) serves as cofactor.

Its subcellular location is the cytoplasm. The catalysed reaction is 4-imidazolone-5-propanoate = trans-urocanate + H2O. It participates in amino-acid degradation; L-histidine degradation into L-glutamate; N-formimidoyl-L-glutamate from L-histidine: step 2/3. Functionally, catalyzes the conversion of urocanate to 4-imidazolone-5-propionate. This chain is Urocanate hydratase, found in Rhizobium meliloti (strain 1021) (Ensifer meliloti).